The chain runs to 394 residues: Phosphoglycerate kinase (394 aa).

Substrate contacts are provided by residues 21–23 (DFN), Arg36, 59–62 (HLGR), Arg118, and Arg151. Residue Ser183 is modified to Phosphoserine. ATP contacts are provided by Lys201 and Gly292. Thr299 bears the Phosphothreonine mark. ATP contacts are provided by residues Glu323 and 350–353 (GGDS).

It belongs to the phosphoglycerate kinase family. As to quaternary structure, monomer.

It is found in the cytoplasm. The enzyme catalyses (2R)-3-phosphoglycerate + ATP = (2R)-3-phospho-glyceroyl phosphate + ADP. Its pathway is carbohydrate degradation; glycolysis; pyruvate from D-glyceraldehyde 3-phosphate: step 2/5. In Priestia megaterium (strain DSM 319 / IMG 1521) (Bacillus megaterium), this protein is Phosphoglycerate kinase (pgk).